A 434-amino-acid polypeptide reads, in one-letter code: Calcium uptake protein 2, mitochondrial (434 aa).

A mitochondrion-targeting transit peptide spans 1–22; the sequence is MAAAAGSCARVAAWGGKLRRGL. The EF-hand 1 domain maps to 172 to 207; the sequence is KPHSGFHVAFKMLDTDGNEMIEKREFFKLQKIISKQ. Residues aspartate 185, aspartate 187, asparagine 189, methionine 191, glutamate 193, and glutamate 196 each coordinate Ca(2+). A Phosphoserine modification is found at serine 205. Residues 227-262 form the EF-hand 2; degenerate domain; sequence EPEINTTLQMRFFGKRGQRKLHYKEFRRFMENLQTE. Residues 293–328 form the EF-hand 3; degenerate domain; sequence TENKDIYWKNVREKLSAGESISLDEFKSFCHFTTHL. The 36-residue stretch at 362 to 397 folds into the EF-hand 4 domain; that stretch reads LSNNILDTVFKIFDLDGDECLSHEEFLGVLKNRMHR. Residues aspartate 375, aspartate 377, aspartate 379, cysteine 381, and glutamate 386 each contribute to the Ca(2+) site.

The protein belongs to the MICU1 family. MICU2 subfamily. Heterodimer; disulfide-linked; heterodimerizes with MICU1. Component of the uniplex complex, composed of MCU, EMRE/SMDT1, MICU1 and MICU2 in a 4:4:1:1 stoichiometry.

The protein localises to the mitochondrion intermembrane space. It localises to the mitochondrion inner membrane. In terms of biological role, calcium sensor of the mitochondrial calcium uniporter (MCU) channel, which senses calcium level via its EF-hand domains. MICU1 and MICU2 form a disulfide-linked heterodimer that stimulates and inhibits MCU activity, depending on the concentration of calcium. At low calcium levels, MICU1 occludes the pore of the MCU channel, preventing mitochondrial calcium uptake. At higher calcium levels, calcium-binding to MICU1 and MICU2 induces a conformational change that weakens MCU-MICU1 interactions and moves the MICU1-MICU2 heterodimer away from the pore, allowing calcium permeation through the MCU channel. This is Calcium uptake protein 2, mitochondrial from Homo sapiens (Human).